The chain runs to 773 residues: ATP-dependent zinc metalloprotease YME1L1 (773 aa).

Residues Met-1–Leu-295 are Mitochondrial matrix-facing. The chain crosses the membrane as a helical span at residues Ile-296–Val-316. The Mitochondrial intermembrane portion of the chain corresponds to Arg-317 to Arg-773. Positions 341, 383, 384, 385, 386, and 387 each coordinate ATP. His-599 provides a ligand contact to Zn(2+). The active site involves Glu-600. Residues His-603 and Asp-677 each coordinate Zn(2+).

The protein in the N-terminal section; belongs to the AAA ATPase family. This sequence in the C-terminal section; belongs to the peptidase M41 family. As to quaternary structure, homohexamer; may also form heterohexamers. Exists in several complexes of 600-1100 kDa. Interacts with AFG1L. Requires Zn(2+) as cofactor. In terms of processing, proteolytically processed by mitochondrial processing peptidase (MPP) to generate the mature form. Degraded in an OMA1-dependent manner in response to oxidative stress. In terms of tissue distribution, high expression in cardiac and skeletal muscle mitochondria.

The protein resides in the mitochondrion inner membrane. It is found in the mitochondrion. The enzyme catalyses ATP + H2O = ADP + phosphate + H(+). In terms of biological role, ATP-dependent metalloprotease that catalyzes the degradation of folded and unfolded proteins with a suitable degron sequence in the mitochondrial intermembrane region. Plays an important role in regulating mitochondrial morphology and function by cleaving OPA1 at position S2, giving rise to a form of OPA1 that promotes maintenance of normal mitochondrial structure and mitochondrial protein metabolism. Ensures cell proliferation, maintains normal cristae morphology and complex I respiration activity, promotes antiapoptotic activity and protects mitochondria from the accumulation of oxidatively damaged membrane proteins. Required to control the accumulation of nonassembled respiratory chain subunits (NDUFB6, OX4 and ND1). Involved in the mitochondrial adaptation in response to various signals, such as stress or developmental cues, by mediating degradation of mitochondrial proteins to rewire the mitochondrial proteome. Catalyzes degradation of mitochondrial proteins, such as translocases, lipid transfer proteins and metabolic enzymes in response to nutrient starvation in order to limit mitochondrial biogenesis: mechanistically, YME1L is activated by decreased phosphatidylethanolamine levels caused by LPIN1 activity in response to mTORC1 inhibition. Acts as a regulator of adult neural stem cell self-renewal by promoting mitochondrial proteome rewiring, preserving neural stem and progenitor cells self-renewal. Required for normal, constitutive degradation of PRELID1. Catalyzes the degradation of OMA1 in response to membrane depolarization. Mediates degradation of TIMM17A downstream of the integrated stress response (ISR). Catalyzes degradation of MICU1 when MICU1 is not assembled via an interchain disulfide. This Homo sapiens (Human) protein is ATP-dependent zinc metalloprotease YME1L1 (YME1L1).